A 770-amino-acid polypeptide reads, in one-letter code: Protein argonaute (770 aa).

An N-terminal domain region spans residues 1 to 151 (MKAKVVINLV…VIHIIHQIQS (151 aa)). The PAZ domain maps to 154–272 (TLWELVNKDP…LLPQLVVPTY (119 aa)). The tract at residues 276–361 (QLESDVAKEI…SQLLLWTNYS (86 aa)) is interdomain connector. A mid domain region spans residues 362-544 (RKYPVILPYE…LSKLGVKYYV (183 aa)). The Piwi domain occupies 473-756 (GLAFIAARNK…FANAIRNEWK (284 aa)). Residues aspartate 558, glutamate 596, aspartate 628, and histidine 745 contribute to the active site. Mn(2+) is bound at residue aspartate 558. Aspartate 628, histidine 745, and valine 770 together coordinate Mn(2+).

This sequence belongs to the argonaute family. Long pAgo subfamily. In terms of assembly, monomer. It depends on Mn(2+) as a cofactor.

Inhibited at greater than 500 mM NaCl. Functionally, a DNA-guided ssDNA endonuclease that may play a role in defense against invading mobile genetic elements. Uses short 5'-phospho-ssDNA sequences as guides (gDNA) to bind complementary target strands, resulting in cleavage of the target DNA (tDNA). Endonucleolytically cleaves DNA in short dsDNA (the gDNA indicates where to cleave on the tDNA). Efficient guide-dependent target DNA cleavage requires a minimal gDNA length of 15 nucleotides (nt) and works up to at least 31 nt. Overexpression decreases plasmid transformation efficiency. Has no appreciable activity with gRNA or on target RNA. Also has guide-independent activity on plasmid DNA called 'chopping'. The cleavage site is 10 nucleotides (nt) downstream of the target residue base-paired with the 5'-end of the gDNA, cleavage is insensitive to adenine methylation. DNA cleavage produces 5'-phosphomonoesters (as it can be ligated by T4 DNA ligase). The polypeptide is Protein argonaute (Pyrococcus furiosus (strain ATCC 43587 / DSM 3638 / JCM 8422 / Vc1)).